Here is a 105-residue protein sequence, read N- to C-terminus: Large ribosomal subunit protein uL24 (105 aa).

This sequence belongs to the universal ribosomal protein uL24 family. Part of the 50S ribosomal subunit.

Its function is as follows. One of two assembly initiator proteins, it binds directly to the 5'-end of the 23S rRNA, where it nucleates assembly of the 50S subunit. In terms of biological role, one of the proteins that surrounds the polypeptide exit tunnel on the outside of the subunit. The chain is Large ribosomal subunit protein uL24 from Aeromonas salmonicida (strain A449).